The chain runs to 325 residues: MLSLRPPCTLSPAPWRRRRTLHGAAGTPQRVSVAAPSAIVEAVSPPARFSFPILVNGCTGKMGLSVAEAVTSSGLHLVPISFSSRDTLDRTVRVGHTDVRIYGPSAREDVLSSVIDEFPDVVVVDYTAPDSVNANAELYCKLGLPFVMGTTGGDRQLLYKSVQDSNNYALISPQMGKQVVAFLAAMEIMAEQFPGAFSGYHLEVLESHQAGKLDISGTAKAVIACFEKLGVSYDMNRMVKIRDPEQQLEMVGVPEEHIEGHAFHLYHLTSPDDSVSFEFQHNVCGRSIYAEGSVDAAMFLHRKVRSNDSKRIYDMIDVLREGSMR.

A chloroplast-targeting transit peptide spans 1–32; it reads MLSLRPPCTLSPAPWRRRRTLHGAAGTPQRVS. NAD(+) is bound by residues 57-62, 149-151, and 172-175; these read GCTGKM, GTT, and SPQM. His-208 (proton donor/acceptor) is an active-site residue. The active-site Proton donor is Lys-212. Residue 217 to 218 coordinates (S)-2,3,4,5-tetrahydrodipicolinate; the sequence is GT.

The protein belongs to the DapB family.

It is found in the plastid. The protein resides in the chloroplast. It carries out the reaction (S)-2,3,4,5-tetrahydrodipicolinate + NAD(+) + H2O = (2S,4S)-4-hydroxy-2,3,4,5-tetrahydrodipicolinate + NADH + H(+). The catalysed reaction is (S)-2,3,4,5-tetrahydrodipicolinate + NADP(+) + H2O = (2S,4S)-4-hydroxy-2,3,4,5-tetrahydrodipicolinate + NADPH + H(+). It participates in amino-acid biosynthesis; L-lysine biosynthesis via DAP pathway; (S)-tetrahydrodipicolinate from L-aspartate: step 4/4. Functionally, catalyzes the conversion of 4-hydroxy-tetrahydrodipicolinate (HTPA) to tetrahydrodipicolinate. This chain is Probable 4-hydroxy-tetrahydrodipicolinate reductase 2, chloroplastic (DAPB2), found in Oryza sativa subsp. japonica (Rice).